Consider the following 1892-residue polypeptide: Alpha-2-macroglobulin (1892 aa).

Residues 1–23 form the signal peptide; it reads MKNIFRKFVFTIFVCLINLQLIA. A cross-link (isoglutamyl cysteine thioester (Cys-Gln)) is located at residues 1441 to 1444; sequence CTEQ.

This sequence belongs to the protease inhibitor I39 (alpha-2-macroglobulin) family. Bacterial alpha-2-macroglobulin subfamily.

Functionally, protects the bacterial cell from host peptidases. In Rickettsia conorii (strain ATCC VR-613 / Malish 7), this protein is Alpha-2-macroglobulin.